We begin with the raw amino-acid sequence, 485 residues long: Membrane-bound lytic murein transglycosylase F (485 aa).

The N-terminal stretch at 1-29 (MFAHTALRQRCAKWLFATGLFLLLGACVE) is a signal peptide. The interval 30-267 (KPSTLERVKE…RLKDRYYGHV (238 aa)) is non-LT domain. The segment at 268–485 (DVLGYVGAYT…DKPADQSPPM (218 aa)) is LT domain. Glu314 is an active-site residue. The interval 465 to 485 (EGNLHVPGVNKDKPADQSPPM) is disordered.

In the N-terminal section; belongs to the bacterial solute-binding protein 3 family. This sequence in the C-terminal section; belongs to the transglycosylase Slt family.

The protein localises to the cell outer membrane. It carries out the reaction Exolytic cleavage of the (1-&gt;4)-beta-glycosidic linkage between N-acetylmuramic acid (MurNAc) and N-acetylglucosamine (GlcNAc) residues in peptidoglycan, from either the reducing or the non-reducing ends of the peptidoglycan chains, with concomitant formation of a 1,6-anhydrobond in the MurNAc residue.. Functionally, murein-degrading enzyme that degrades murein glycan strands and insoluble, high-molecular weight murein sacculi, with the concomitant formation of a 1,6-anhydromuramoyl product. Lytic transglycosylases (LTs) play an integral role in the metabolism of the peptidoglycan (PG) sacculus. Their lytic action creates space within the PG sacculus to allow for its expansion as well as for the insertion of various structures such as secretion systems and flagella. The chain is Membrane-bound lytic murein transglycosylase F from Pseudomonas putida (strain GB-1).